The chain runs to 178 residues: Acireductone dioxygenase (178 aa).

Fe(2+) contacts are provided by His-100, His-102, Glu-106, and His-145. His-100, His-102, Glu-106, and His-145 together coordinate Ni(2+).

Belongs to the acireductone dioxygenase (ARD) family. In terms of assembly, monomer. It depends on Fe(2+) as a cofactor. The cofactor is Ni(2+).

The enzyme catalyses 1,2-dihydroxy-5-(methylsulfanyl)pent-1-en-3-one + O2 = 3-(methylsulfanyl)propanoate + CO + formate + 2 H(+). It catalyses the reaction 1,2-dihydroxy-5-(methylsulfanyl)pent-1-en-3-one + O2 = 4-methylsulfanyl-2-oxobutanoate + formate + 2 H(+). The protein operates within amino-acid biosynthesis; L-methionine biosynthesis via salvage pathway; L-methionine from S-methyl-5-thio-alpha-D-ribose 1-phosphate: step 5/6. Catalyzes 2 different reactions between oxygen and the acireductone 1,2-dihydroxy-3-keto-5-methylthiopentene (DHK-MTPene) depending upon the metal bound in the active site. Fe-containing acireductone dioxygenase (Fe-ARD) produces formate and 2-keto-4-methylthiobutyrate (KMTB), the alpha-ketoacid precursor of methionine in the methionine recycle pathway. Ni-containing acireductone dioxygenase (Ni-ARD) produces methylthiopropionate, carbon monoxide and formate, and does not lie on the methionine recycle pathway. The sequence is that of Acireductone dioxygenase from Bacillus velezensis (strain DSM 23117 / BGSC 10A6 / LMG 26770 / FZB42) (Bacillus amyloliquefaciens subsp. plantarum).